The sequence spans 367 residues: Serine O-succinyltransferase (367 aa).

The AB hydrolase-1 domain maps to 41 to 351 (NAVLILTGLS…SPQGHDAFLV (311 aa)). Residues 48 to 51 (GLSP) form an important for substrate specificity region. Ser146 serves as the catalytic Nucleophile. Arg215 serves as a coordination point for substrate. Catalysis depends on residues Asp313 and His346. Asp347 is a binding site for substrate.

Belongs to the AB hydrolase superfamily. MetX family. In terms of assembly, homodimer.

It is found in the cytoplasm. The catalysed reaction is succinyl-CoA + L-serine = O-succinyl-L-serine + CoA. It carries out the reaction L-homoserine + succinyl-CoA = O-succinyl-L-homoserine + CoA. Its pathway is amino-acid biosynthesis; L-cysteine biosynthesis; L-cysteine from L-serine: step 1/2. Functionally, transfers a succinyl group from succinyl-CoA to L-serine, forming succinyl-L-serine. In vitro, also has homoserine succinyl transferase activity. This Frateuria aurantia (strain ATCC 33424 / DSM 6220 / KCTC 2777 / LMG 1558 / NBRC 3245 / NCIMB 13370) (Acetobacter aurantius) protein is Serine O-succinyltransferase.